We begin with the raw amino-acid sequence, 115 residues long: MDTSLIRELAELALAGSGQHCHEEALCIAEWLERLGQDEAARLIRISSLANQGRYQEALAFAHGNPWPALEPWFALCEWHLGLGAALDRRLAGLGGSSDPALADFAAGMRAQVRT.

It belongs to the YscG family. As to quaternary structure, forms a stable heterotrimeric complex with PscE and PscF/SctF in the cytoplasm. Co-stabilized by PscE.

The protein resides in the cytoplasm. In terms of biological role, chaperone of the type III secretion system (T3SS), also called injectisome, which is used to inject bacterial effector proteins into eukaryotic host cells, facilitating the establishment and dissemination of infection. Along with PscE, prevents premature polymerization of the PscF/SctF needle protein within the cytoplasm. Required for type III secretion needle assembly. Also required for cytotoxicity by influencing PscF/SctF levels. This is Type 3 secretion system chaperone PscG (pscG) from Pseudomonas aeruginosa (strain ATCC 15692 / DSM 22644 / CIP 104116 / JCM 14847 / LMG 12228 / 1C / PRS 101 / PAO1).